The following is a 231-amino-acid chain: MCGNNMSVPLLTDAATVSGAERETAAVIFLHGLGDTGHSWADALSTIRLPHVKYICPHAPRIPVTLNMKMVMPSWFDLMGLSPDAPEDEAGIKKAAENIKALIEHEMKNGIPANRIVLGGFSQGGALSLYTALTCPHPLAGIVALSCWLPLHRNFPQAANGSAKDLAILQCHGELDPMVPVRFGALTAEKLRTVVTPARVQFKTYPGVMHSSCPQEMAAVKEFLEKLLPPV.

The S-palmitoyl cysteine moiety is linked to residue Cys-2. Phosphoserine is present on Ser-82. Active-site charge relay system residues include Ser-122, Asp-176, and His-210.

Belongs to the AB hydrolase superfamily. AB hydrolase 2 family.

It is found in the cytoplasm. The enzyme catalyses S-hexadecanoyl-L-cysteinyl-[protein] + H2O = L-cysteinyl-[protein] + hexadecanoate + H(+). It catalyses the reaction prostaglandin E2 1-glyceryl ester + H2O = prostaglandin E2 + glycerol + H(+). The catalysed reaction is 1-hexadecanoyl-sn-glycero-3-phosphocholine + H2O = sn-glycerol 3-phosphocholine + hexadecanoate + H(+). It carries out the reaction 1-octadecanoyl-sn-glycero-3-phosphocholine + H2O = octadecanoate + sn-glycerol 3-phosphocholine + H(+). The enzyme catalyses 1-hexadecanoyl-sn-glycero-3-phosphate + H2O = sn-glycerol 3-phosphate + hexadecanoate + H(+). It catalyses the reaction 1-hexadecanoyl-sn-glycero-3-phospho-L-serine + H2O = sn-glycero-3-phospho-L-serine + hexadecanoate + H(+). Acts as an acyl-protein thioesterase hydrolyzing fatty acids from S-acylated cysteine residues in proteins such as trimeric G alpha proteins, GSDMD, GAP43, ZDHHC6 or HRAS. Deacylates GAP43. Mediates depalmitoylation of ZDHHC6. Has lysophospholipase activity. Hydrolyzes prostaglandin glycerol esters (PG-Gs) in the following order prostaglandin D2-glycerol ester (PGD2-G) &gt; prostaglandin E2 glycerol ester (PGE2-G) &gt; prostaglandin F2-alpha-glycerol ester (PGF2-alpha-G). Hydrolyzes 1-arachidonoylglycerol but not 2-arachidonoylglycerol or arachidonoylethanolamide. In Rattus norvegicus (Rat), this protein is Acyl-protein thioesterase 2 (Lypla2).